The following is a 90-amino-acid chain: Small ribosomal subunit protein uS15c (90 aa).

It belongs to the universal ribosomal protein uS15 family. In terms of assembly, part of the 30S ribosomal subunit.

The protein localises to the plastid. It is found in the chloroplast. The polypeptide is Small ribosomal subunit protein uS15c (rps15) (Populus alba (White poplar)).